The sequence spans 206 residues: Protein Nef (206 aa).

Residue glycine 2 is the site of N-myristoyl glycine; by host attachment. A Phosphoserine; by host modification is found at serine 6. The tract at residues 62-65 is acidic; interacts with host PACS1 and PACS2; stabilizes the interaction of NEF/MHC-I with host AP1M1; necessary for MHC-I internalization; the sequence is EEEE. Positions 69-78 are SH3-binding; interaction with Src family tyrosine kinases; sequence PVTPQVPLRP. The short motif at 72–75 is the PxxP; stabilizes the interaction of NEF/MHC-I with host AP1M1; necessary for MHC-I internalization element; that stretch reads PQVP. Residues 108-124 form a mediates dimerization, Nef-PTE1 interaction region; sequence DILDLWIYHTQGYFPDW. The tract at residues 148–180 is binding to ATP6V1H; sequence VEPEKLEEANKGENTSLLHPVSLHGMDDPEREV. A Dileucine internalization motif; necessary for CD4 internalization motif is present at residues 164–165; that stretch reads LL. A Diacidic; necessary for CD4 internalization motif is present at residues 174–175; that stretch reads DD.

This sequence belongs to the lentivirus primate group Nef protein family. Monomer; cytosolic form. Homodimer; membrane bound form. Interacts with Nef associated p21-activated kinase (PAK2); this interaction activates PAK2. Associates with the Nef-MHC-I-AP1 complex; this complex is required for MHC-I internalization. Interacts (via C-terminus) with host PI3-kinase. Interacts with host PACS1; this interaction seems to be weak. Interacts with host PACS2. Interacts with host LCK and MAPK3; these interactions inhibit the kinase activity of the latter. Interacts with host ATP6V1H; this interaction may play a role in CD4 endocytosis. Associates with the CD4-Nef-AP2 complex; this complex is required for CD4 internalization. Interacts with host AP2 subunit alpha and AP2 subunit sigma2. Interacts with TCR-zeta chain; this interaction up-regulates the Fas ligand (FasL) surface expression. Interacts with host HCK, LYN, and SRC; these interactions activate the Src family kinases. Interacts with MAP3K5; this interaction inhibits the Fas and TNFR-mediated death signals. Interacts with beta-COP and PTE1. Interacts with human RACK1; this increases Nef phosphorylation by PKC. Interacts with TP53; this interaction decreases the half-life of TP53, protecting the infected cell against p53-mediated apoptosis. The virion-associated Nef proteins are cleaved by the viral protease to release the soluble C-terminal core protein. Nef is probably cleaved concomitantly with viral structural proteins on maturation of virus particles. In terms of processing, myristoylated. Post-translationally, phosphorylated on serine residues, probably by host PKCdelta and theta.

The protein localises to the host cell membrane. It localises to the virion. Its subcellular location is the secreted. It is found in the host Golgi apparatus membrane. Factor of infectivity and pathogenicity, required for optimal virus replication. Alters numerous pathways of T-lymphocyte function and down-regulates immunity surface molecules in order to evade host defense and increase viral infectivity. Alters the functionality of other immunity cells, like dendritic cells, monocytes/macrophages and NK cells. Functionally, in infected CD4(+) T-lymphocytes, down-regulates the surface MHC-I, mature MHC-II, CD4, CD28, CCR5 and CXCR4 molecules. Mediates internalization and degradation of host CD4 through the interaction of with the cytoplasmic tail of CD4, the recruitment of AP-2 (clathrin adapter protein complex 2), internalization through clathrin coated pits, and subsequent transport to endosomes and lysosomes for degradation. Diverts host MHC-I molecules to the trans-Golgi network-associated endosomal compartments by an endocytic pathway to finally target them for degradation. MHC-I down-regulation may involve AP-1 (clathrin adapter protein complex 1) or possibly Src family kinase-ZAP70/Syk-PI3K cascade recruited by PACS2. In consequence infected cells are masked for immune recognition by cytotoxic T-lymphocytes. Decreasing the number of immune receptors also prevents reinfection by more HIV particles (superinfection). Down-regulates host SERINC3 and SERINC5 thereby excluding these proteins from the viral particles. Virion infectivity is drastically higher when SERINC3 or SERINC5 are excluded from the viral envelope, because these host antiviral proteins impair the membrane fusion event necessary for subsequent virion penetration. Its function is as follows. Bypasses host T-cell signaling by inducing a transcriptional program nearly identical to that of anti-CD3 cell activation. Interaction with TCR-zeta chain up-regulates the Fas ligand (FasL). Increasing surface FasL molecules and decreasing surface MHC-I molecules on infected CD4(+) cells send attacking cytotoxic CD8+ T-lymphocytes into apoptosis. In terms of biological role, plays a role in optimizing the host cell environment for viral replication without causing cell death by apoptosis. Protects the infected cells from apoptosis in order to keep them alive until the next virus generation is ready to strike. Inhibits the Fas and TNFR-mediated death signals by blocking MAP3K5/ASK1. Decreases the half-life of TP53, protecting the infected cell against p53-mediated apoptosis. Inhibits the apoptotic signals regulated by the Bcl-2 family proteins through the formation of a Nef/PI3-kinase/PAK2 complex that leads to activation of PAK2 and induces phosphorylation of host BAD. Extracellular Nef protein targets CD4(+) T-lymphocytes for apoptosis by interacting with CXCR4 surface receptors. The protein is Protein Nef of Human immunodeficiency virus type 1 group M subtype B (isolate LW123) (HIV-1).